A 195-amino-acid polypeptide reads, in one-letter code: ATP-dependent Clp protease proteolytic subunit (195 aa).

The Nucleophile role is filled by Ser-98. Residue His-123 is part of the active site.

It belongs to the peptidase S14 family. Fourteen ClpP subunits assemble into 2 heptameric rings which stack back to back to give a disk-like structure with a central cavity, resembling the structure of eukaryotic proteasomes.

It localises to the cytoplasm. The catalysed reaction is Hydrolysis of proteins to small peptides in the presence of ATP and magnesium. alpha-casein is the usual test substrate. In the absence of ATP, only oligopeptides shorter than five residues are hydrolyzed (such as succinyl-Leu-Tyr-|-NHMec, and Leu-Tyr-Leu-|-Tyr-Trp, in which cleavage of the -Tyr-|-Leu- and -Tyr-|-Trp bonds also occurs).. In terms of biological role, cleaves peptides in various proteins in a process that requires ATP hydrolysis. Has a chymotrypsin-like activity. Plays a major role in the degradation of misfolded proteins. The polypeptide is ATP-dependent Clp protease proteolytic subunit (Helicobacter pylori (strain G27)).